Consider the following 836-residue polypeptide: MIAELVSSALGLALYLNTLSADFCYDDSRAIKTNQDLLPETPWTHIFYNDFWGTLLTHSGSHKSYRPLCTLSFRLNHAIGGLNPWSYHLVNVLLHAAVTGLFTSFSKILLGDGYWTFMAGLMFASHPIHTEAVAGIVGRADVGASLFFLLSLLCYIKHCSTRGYSARTWGWFLGSGLCAGCSMLWKEQGVTVLAVSAVYDVFVFHRLKIKQILPTIYKRKNLSLFLSISLLIFWGSSLLGARLYWMGNKPPSFSNSDNPAADSDSLLTRTLTFFYLPTKNLWLLLCPDTLSFDWSMDAVPLLKTVCDWRNLHTVAFYTGLLLLAYYGLKSPSVDRECNGKTVTNGKQNANGHSCLSDVEYQNSETKSSFASKVENGIKNDVSQRTQLPSTENIVVLSLSLLIIPFVPATNLFFYVGFVIAERVLYIPSMGFCLLITVGARALYVKVQKRFLKSLIFYATATLIVFYGLKTAIRNGDWQNEEMLYRSGIKVNPAKAWGNLGNVLKSQSKISEAESAYRNALYYRSNMADMLYNLGLLLQENSRFAEALHYYKLAIGSRPTLASAYLNTGIILMNQGRTEEARRTFLKCSEIPDENLKDPHAHKSSVTSCLYNLGKLYHEQGHYEEALSVYKEAIQKMPRQFAPQSLYNMMGEAYMRLSKLPEAEHWYMESLRSKTDHIPAHLTYGKLLALTGRKSEAEKLFLKAIELDPTKGNCYMHYGQFLLEEARLIEAAEMAKKAAELDSTEFDVVFNAAHMLRQASLNEAAEKYYDLAARLRPNYPAALMNLGAILHLNGRLQKAEANYLRALQLKPDDVITQSNLRKLWNIMEKQGLKTSKT.

The helical transmembrane segment at 1–21 threads the bilayer; sequence MIAELVSSALGLALYLNTLSA. Residues 22–84 lie on the Extracellular side of the membrane; that stretch reads DFCYDDSRAI…LNHAIGGLNP (63 aa). A helical transmembrane segment spans residues 85–105; that stretch reads WSYHLVNVLLHAAVTGLFTSF. The Cytoplasmic segment spans residues 106–107; sequence SK. A helical transmembrane segment spans residues 108–128; that stretch reads ILLGDGYWTFMAGLMFASHPI. Residues 129-132 lie on the Extracellular side of the membrane; it reads HTEA. A helical transmembrane segment spans residues 133–153; sequence VAGIVGRADVGASLFFLLSLL. Over 154-162 the chain is Cytoplasmic; it reads CYIKHCSTR. 2 helical membrane passes run 163–184 and 185–204; these read GYSARTWGWFLGSGLCAGCSML and WKEQGVTVLAVSAVYDVFVF. Residues 205 to 220 are Cytoplasmic-facing; sequence HRLKIKQILPTIYKRK. A helical membrane pass occupies residues 221 to 241; sequence NLSLFLSISLLIFWGSSLLGA. The Extracellular portion of the chain corresponds to 242 to 312; sequence RLYWMGNKPP…KTVCDWRNLH (71 aa). A helical membrane pass occupies residues 313-333; sequence TVAFYTGLLLLAYYGLKSPSV. Residues 334–399 are Cytoplasmic-facing; that stretch reads DRECNGKTVT…TENIVVLSLS (66 aa). A helical membrane pass occupies residues 400 to 420; the sequence is LLIIPFVPATNLFFYVGFVIA. At 421–422 the chain is on the extracellular side; sequence ER. Residues 423-443 traverse the membrane as a helical segment; sequence VLYIPSMGFCLLITVGARALY. The Cytoplasmic portion of the chain corresponds to 444–449; sequence VKVQKR. The helical transmembrane segment at 450-470 threads the bilayer; sequence FLKSLIFYATATLIVFYGLKT. At 471–836 the chain is on the extracellular side; the sequence is AIRNGDWQNE…EKQGLKTSKT (366 aa). 9 TPR repeats span residues 493-526, 527-560, 561-594, 606-639, 643-676, 677-710, 711-744, 745-778, and 779-812; these read AKAWGNLGNVLKSQSKISEAESAYRNALYYRSNM, ADMLYNLGLLLQENSRFAEALHYYKLAIGSRPTL, ASAYLNTGIILMNQGRTEEARRTFLKCSEIPDEN, TSCLYNLGKLYHEQGHYEEALSVYKEAIQKMPRQ, QSLYNMMGEAYMRLSKLPEAEHWYMESLRSKTDH, IPAHLTYGKLLALTGRKSEAEKLFLKAIELDPTK, GNCYMHYGQFLLEEARLIEAAEMAKKAAELDSTE, FDVVFNAAHMLRQASLNEAAEKYYDLAARLRPNY, and PAALMNLGAILHLNGRLQKAEANYLRALQLKPDD.

Belongs to the TMTC family.

It localises to the membrane. It is found in the endoplasmic reticulum. The enzyme catalyses a di-trans,poly-cis-dolichyl beta-D-mannosyl phosphate + L-seryl-[protein] = 3-O-(alpha-D-mannosyl)-L-seryl-[protein] + a di-trans,poly-cis-dolichyl phosphate + H(+). The catalysed reaction is a di-trans,poly-cis-dolichyl beta-D-mannosyl phosphate + L-threonyl-[protein] = 3-O-(alpha-D-mannosyl)-L-threonyl-[protein] + a di-trans,poly-cis-dolichyl phosphate + H(+). It participates in protein modification; protein glycosylation. In terms of biological role, transfers mannosyl residues to the hydroxyl group of serine or threonine residues. The 4 members of the TMTC family are O-mannosyl-transferases dedicated primarily to the cadherin superfamily, each member seems to have a distinct role in decorating the cadherin domains with O-linked mannose glycans at specific regions. Also acts as O-mannosyl-transferase on other proteins such as PDIA3. The chain is Protein O-mannosyl-transferase TMTC2 from Homo sapiens (Human).